The sequence spans 351 residues: Phosphoribosylformylglycinamidine cyclo-ligase (351 aa).

The protein belongs to the AIR synthase family.

The protein resides in the cytoplasm. It carries out the reaction 2-formamido-N(1)-(5-O-phospho-beta-D-ribosyl)acetamidine + ATP = 5-amino-1-(5-phospho-beta-D-ribosyl)imidazole + ADP + phosphate + H(+). Its pathway is purine metabolism; IMP biosynthesis via de novo pathway; 5-amino-1-(5-phospho-D-ribosyl)imidazole from N(2)-formyl-N(1)-(5-phospho-D-ribosyl)glycinamide: step 2/2. The chain is Phosphoribosylformylglycinamidine cyclo-ligase from Burkholderia pseudomallei (strain 1710b).